The chain runs to 194 residues: Oligoribonuclease (194 aa).

In terms of domain architecture, Exonuclease spans 11-174 (LIWIDLEMTG…SDVRDSIDEL (164 aa)). Y132 is a catalytic residue.

Belongs to the oligoribonuclease family.

The protein resides in the cytoplasm. Functionally, 3'-to-5' exoribonuclease specific for small oligoribonucleotides. This Xanthomonas campestris pv. campestris (strain ATCC 33913 / DSM 3586 / NCPPB 528 / LMG 568 / P 25) protein is Oligoribonuclease.